Consider the following 290-residue polypeptide: uncharacterized protein (290 aa).

This is an uncharacterized protein from Escherichia phage lambda (Bacteriophage lambda).